We begin with the raw amino-acid sequence, 200 residues long: dTTP/UTP pyrophosphatase (200 aa).

The active-site Proton acceptor is aspartate 73.

The protein belongs to the Maf family. YhdE subfamily. A divalent metal cation serves as cofactor.

It is found in the cytoplasm. It catalyses the reaction dTTP + H2O = dTMP + diphosphate + H(+). It carries out the reaction UTP + H2O = UMP + diphosphate + H(+). Nucleoside triphosphate pyrophosphatase that hydrolyzes dTTP and UTP. May have a dual role in cell division arrest and in preventing the incorporation of modified nucleotides into cellular nucleic acids. The chain is dTTP/UTP pyrophosphatase from Chromohalobacter salexigens (strain ATCC BAA-138 / DSM 3043 / CIP 106854 / NCIMB 13768 / 1H11).